The primary structure comprises 107 residues: Auxin-responsive protein SAUR50 (107 aa).

It belongs to the ARG7 family. Interacts with BZR1. Expressed in cotyledons, leaves, flowers and siliques.

The protein localises to the cell membrane. In terms of biological role, provide a mechanistic link between auxin and plasma membrane H(+)-ATPases (PM H(+)-ATPases, e.g. AHA1 and AHA2), and triggers PM H(+)-ATPases activity by promoting phosphorylation of their C-terminal autoinhibitory domain as a result of PP2C-D subfamily of type 2C phosphatases inhibition, thus leading to the acidification of the apoplast and the facilitation of solutes and water uptake to drive cell expansion. Triggers plant growth probably by promoting cell elongation. Regulates branch angles and bending. Effector of hormonal and environmental signals in plant growth. This is Auxin-responsive protein SAUR50 from Arabidopsis thaliana (Mouse-ear cress).